The primary structure comprises 417 residues: Gamma-glutamyl phosphate reductase (417 aa).

It belongs to the gamma-glutamyl phosphate reductase family.

Its subcellular location is the cytoplasm. It carries out the reaction L-glutamate 5-semialdehyde + phosphate + NADP(+) = L-glutamyl 5-phosphate + NADPH + H(+). It functions in the pathway amino-acid biosynthesis; L-proline biosynthesis; L-glutamate 5-semialdehyde from L-glutamate: step 2/2. In terms of biological role, catalyzes the NADPH-dependent reduction of L-glutamate 5-phosphate into L-glutamate 5-semialdehyde and phosphate. The product spontaneously undergoes cyclization to form 1-pyrroline-5-carboxylate. The polypeptide is Gamma-glutamyl phosphate reductase (Sodalis glossinidius (strain morsitans)).